Consider the following 435-residue polypeptide: Probable tRNA pseudouridine synthase D (435 aa).

D95 functions as the Nucleophile in the catalytic mechanism. Positions 170–396 (GVPNYFGTQR…SSGTRRAVLV (227 aa)) constitute a TRUD domain.

The protein belongs to the pseudouridine synthase TruD family.

The catalysed reaction is uridine(13) in tRNA = pseudouridine(13) in tRNA. In terms of biological role, could be responsible for synthesis of pseudouridine from uracil-13 in transfer RNAs. The sequence is that of Probable tRNA pseudouridine synthase D from Natronomonas pharaonis (strain ATCC 35678 / DSM 2160 / CIP 103997 / JCM 8858 / NBRC 14720 / NCIMB 2260 / Gabara) (Halobacterium pharaonis).